The sequence spans 123 residues: MPTIQQLIRNQRQPVENRTKSPALQGCPQRRGVCTRVYTTTPKKPNSALRKVARVRLTSGFEITAYIPGIGHNSQEHSVVLVRGGRVKDLPGVRYHIVRGTLDAVGVKNRQQGRSKYGVKKPK.

Belongs to the universal ribosomal protein uS12 family. In terms of assembly, part of the 30S ribosomal subunit.

It localises to the plastid. Its subcellular location is the chloroplast. Its function is as follows. With S4 and S5 plays an important role in translational accuracy. Located at the interface of the 30S and 50S subunits. This chain is Small ribosomal subunit protein uS12c (rps12), found in Huperzia lucidula (Shining clubmoss).